The sequence spans 71 residues: Gas vesicle protein A (71 aa).

The interval 12 to 22 (LAEVIDRILDK) is alpha helix 1. The beta-strand 1 stretch occupies residues 26-34 (IDAWARVSL). A beta turn region spans residues 35–37 (VGI). The interval 38 to 46 (ELLAIEARV) is beta-strand 2. The segment at 51 to 70 (VETYLKYAEAVGLTQXAXXA) is alpha helix 2.

Belongs to the gas vesicle GvpA family. As to quaternary structure, the gas vesicle shell is 2 nm thick and consists of a single layer of this protein. It forms helical ribs nearly perpendicular to the long axis of the vesicle.

The protein resides in the gas vesicle shell. Its function is as follows. Gas vesicles are hollow, gas filled proteinaceous nanostructures found in some microorganisms. During planktonic growth they allow positioning of the organism at a favorable depth for light or nutrient acquisition. GvpA forms the protein shell. This is Gas vesicle protein A from Microcystis sp. (strain BC 84/1).